The following is a 398-amino-acid chain: Arginine biosynthesis bifunctional protein ArgJ (398 aa).

Substrate contacts are provided by T148, K174, T185, E271, N393, and T398. T185 acts as the Nucleophile in catalysis.

Belongs to the ArgJ family. As to quaternary structure, heterotetramer of two alpha and two beta chains.

Its subcellular location is the cytoplasm. The catalysed reaction is N(2)-acetyl-L-ornithine + L-glutamate = N-acetyl-L-glutamate + L-ornithine. It catalyses the reaction L-glutamate + acetyl-CoA = N-acetyl-L-glutamate + CoA + H(+). Its pathway is amino-acid biosynthesis; L-arginine biosynthesis; L-ornithine and N-acetyl-L-glutamate from L-glutamate and N(2)-acetyl-L-ornithine (cyclic): step 1/1. It functions in the pathway amino-acid biosynthesis; L-arginine biosynthesis; N(2)-acetyl-L-ornithine from L-glutamate: step 1/4. In terms of biological role, catalyzes two activities which are involved in the cyclic version of arginine biosynthesis: the synthesis of N-acetylglutamate from glutamate and acetyl-CoA as the acetyl donor, and of ornithine by transacetylation between N(2)-acetylornithine and glutamate. In Listeria monocytogenes serovar 1/2a (strain ATCC BAA-679 / EGD-e), this protein is Arginine biosynthesis bifunctional protein ArgJ.